A 115-amino-acid chain; its full sequence is Nucleoid-associated protein LBL_0065 (115 aa).

The protein belongs to the YbaB/EbfC family. Homodimer.

The protein localises to the cytoplasm. Its subcellular location is the nucleoid. Binds to DNA and alters its conformation. May be involved in regulation of gene expression, nucleoid organization and DNA protection. This is Nucleoid-associated protein LBL_0065 from Leptospira borgpetersenii serovar Hardjo-bovis (strain L550).